Consider the following 444-residue polypeptide: N-succinylarginine dihydrolase (444 aa).

Residues 19-28, Asn110, and 137-138 contribute to the substrate site; these read AGLSFGNVAS and HR. Glu174 is an active-site residue. Arg214 is a binding site for substrate. His250 is a catalytic residue. Substrate contacts are provided by Asp252 and Asn362. Catalysis depends on Cys368, which acts as the Nucleophile.

The protein belongs to the succinylarginine dihydrolase family. Homodimer.

The enzyme catalyses N(2)-succinyl-L-arginine + 2 H2O + 2 H(+) = N(2)-succinyl-L-ornithine + 2 NH4(+) + CO2. It functions in the pathway amino-acid degradation; L-arginine degradation via AST pathway; L-glutamate and succinate from L-arginine: step 2/5. Catalyzes the hydrolysis of N(2)-succinylarginine into N(2)-succinylornithine, ammonia and CO(2). This chain is N-succinylarginine dihydrolase, found in Shewanella baltica (strain OS155 / ATCC BAA-1091).